Consider the following 402-residue polypeptide: 1-deoxy-D-xylulose 5-phosphate reductoisomerase (402 aa).

NADPH is bound by residues T25, G26, S27, V28, R52, N53, and N136. A 1-deoxy-D-xylulose 5-phosphate-binding site is contributed by K137. NADPH is bound at residue E138. D162 provides a ligand contact to Mn(2+). S163, E164, S188, and H211 together coordinate 1-deoxy-D-xylulose 5-phosphate. E164 lines the Mn(2+) pocket. Position 217 (G217) interacts with NADPH. Residues S224, N229, K230, and E233 each contribute to the 1-deoxy-D-xylulose 5-phosphate site. Residue E233 coordinates Mn(2+).

This sequence belongs to the DXR family. It depends on Mg(2+) as a cofactor. Mn(2+) is required as a cofactor.

It carries out the reaction 2-C-methyl-D-erythritol 4-phosphate + NADP(+) = 1-deoxy-D-xylulose 5-phosphate + NADPH + H(+). It functions in the pathway isoprenoid biosynthesis; isopentenyl diphosphate biosynthesis via DXP pathway; isopentenyl diphosphate from 1-deoxy-D-xylulose 5-phosphate: step 1/6. Catalyzes the NADPH-dependent rearrangement and reduction of 1-deoxy-D-xylulose-5-phosphate (DXP) to 2-C-methyl-D-erythritol 4-phosphate (MEP). The sequence is that of 1-deoxy-D-xylulose 5-phosphate reductoisomerase from Rhodospirillum centenum (strain ATCC 51521 / SW).